Here is an 81-residue protein sequence, read N- to C-terminus: Small cysteine-rich protein 1 1 (81 aa).

The N-terminal stretch at 1 to 19 (MGVHFNICLLLLLVATISS) is a signal peptide. The propeptide occupies 20–39 (QTLKATEKDDSTDENPFGIY).

The protein belongs to the Cnidaria small cysteine-rich protein (SCRiP) family. alpha subfamily. Post-translationally, the basic myotoxic domain of rattlesnake crotamine toxins (with 6 Cys residues) has been detected in this protein. However, this protein contains 2 additional Cys at the C-terminal region. Hence, this protein may contain 4 disulfide bonds instead of the 3 suggested by the myotoxin domain.

Its subcellular location is the secreted. It is found in the nematocyst. In terms of biological role, induces neurotoxic symptoms on zebrafish. Has also been claimed to be implied in calcification, but tests on homolog proteins suggest that proteins of this family have a neurotoxic function and not a calcification function. In Montipora capitata (Rice coral), this protein is Small cysteine-rich protein 1 1.